The primary structure comprises 125 residues: MSNLLKEFNEQQMKLLSNKEIPKFSAGDTLRVSMKIFDGVSERIQVFEGVCIKRRNNGLHSSFTLRKISYNESIQLQVFLYSPTVESIEVVKFGKVRRAKLYYMLSLFGKSARIKERSNVARHAS.

It belongs to the bacterial ribosomal protein bL19 family.

This protein is located at the 30S-50S ribosomal subunit interface and may play a role in the structure and function of the aminoacyl-tRNA binding site. The chain is Large ribosomal subunit protein bL19 from Ehrlichia canis (strain Jake).